The chain runs to 101 residues: Small ribosomal subunit protein uS14 (101 aa).

Positions 1 to 26 are disordered; the sequence is MAKVSSIKKNESRKKKSQSLHNKRSA. The segment covering 11 to 26 has biased composition (basic residues); it reads ESRKKKSQSLHNKRSA.

The protein belongs to the universal ribosomal protein uS14 family. As to quaternary structure, part of the 30S ribosomal subunit. Contacts proteins S3 and S10.

In terms of biological role, binds 16S rRNA, required for the assembly of 30S particles and may also be responsible for determining the conformation of the 16S rRNA at the A site. The sequence is that of Small ribosomal subunit protein uS14 from Rickettsia felis (strain ATCC VR-1525 / URRWXCal2) (Rickettsia azadi).